Consider the following 397-residue polypeptide: MPDWLSALLITLLKAVLVALALLTAFAYMTLIERRLLGRIQLRPGPNRVGPMGLLQPLADAIKSIFKEDVTVTLADKLVYTLAPILAIGMALTAFGGIPAGPPGSLFGTDPWVYNLDAGILALLALTSMGVYGIFLGGWASGSKYPMLGSLRSSAQMISYELGMGLSVLGLLMLVGSTNFLDIVEWQAGPRGHGWLILFQVFAFALFMVSSFAEVNRTPFDLPEAEQELVAGYLTEYSSIKWALFQMAEYVNIMTASALMSTLFFGGYRGPTFLEPLIPGISSWPLVWLIAKIAFFMFLFIWVRATLPRLRYDQLMRLGWKLTLPLALVNTLVVAAVLAFVPAEGLFGIPRLWLLGAVSLLLLLILFAASDAVRGLWNSPALRNEEKRVPGRPLGGD.

Transmembrane regions (helical) follow at residues 7-27, 78-98, 120-140, 164-184, 195-215, 247-267, 283-303, 322-342, and 353-373; these read ALLITLLKAVLVALALLTAFA, LVYTLAPILAIGMALTAFGGI, ILALLALTSMGVYGIFLGGWA, MGLSVLGLLMLVGSTNFLDIV, WLILFQVFAFALFMVSSFAEV, MAEYVNIMTASALMSTLFFGG, SWPLVWLIAKIAFFMFLFIWV, LTLPLALVNTLVVAAVLAFVP, and WLLGAVSLLLLLILFAASDAV.

This sequence belongs to the complex I subunit 1 family. NDH-1 is composed of 15 different subunits. Subunits NuoA, H, J, K, L, M, N constitute the membrane sector of the complex.

The protein localises to the cell membrane. The catalysed reaction is a quinone + NADH + 5 H(+)(in) = a quinol + NAD(+) + 4 H(+)(out). Its function is as follows. NDH-1 shuttles electrons from NADH, via FMN and iron-sulfur (Fe-S) centers, to quinones in the respiratory chain. The immediate electron acceptor for the enzyme in this species is believed to be ubiquinone. Couples the redox reaction to proton translocation (for every two electrons transferred, four hydrogen ions are translocated across the cytoplasmic membrane), and thus conserves the redox energy in a proton gradient. This subunit may bind ubiquinone. This is NADH-quinone oxidoreductase subunit H from Deinococcus radiodurans (strain ATCC 13939 / DSM 20539 / JCM 16871 / CCUG 27074 / LMG 4051 / NBRC 15346 / NCIMB 9279 / VKM B-1422 / R1).